Reading from the N-terminus, the 206-residue chain is uncharacterized protein (206 aa).

It localises to the plastid. Its subcellular location is the cyanelle. This is an uncharacterized protein from Cyanophora paradoxa.